A 136-amino-acid polypeptide reads, in one-letter code: Holo-[acyl-carrier-protein] synthase (136 aa).

Mg(2+) contacts are provided by Asp-8 and Glu-62.

The protein belongs to the P-Pant transferase superfamily. AcpS family. Mg(2+) serves as cofactor.

The protein resides in the cytoplasm. The catalysed reaction is apo-[ACP] + CoA = holo-[ACP] + adenosine 3',5'-bisphosphate + H(+). Functionally, transfers the 4'-phosphopantetheine moiety from coenzyme A to a Ser of acyl-carrier-protein. In Polynucleobacter necessarius subsp. necessarius (strain STIR1), this protein is Holo-[acyl-carrier-protein] synthase.